We begin with the raw amino-acid sequence, 476 residues long: tRNA(Ile)-lysidine synthase (476 aa).

Residue 30-35 (SGGPDS) participates in ATP binding.

It belongs to the tRNA(Ile)-lysidine synthase family.

It localises to the cytoplasm. The catalysed reaction is cytidine(34) in tRNA(Ile2) + L-lysine + ATP = lysidine(34) in tRNA(Ile2) + AMP + diphosphate + H(+). Its function is as follows. Ligates lysine onto the cytidine present at position 34 of the AUA codon-specific tRNA(Ile) that contains the anticodon CAU, in an ATP-dependent manner. Cytidine is converted to lysidine, thus changing the amino acid specificity of the tRNA from methionine to isoleucine. This Bacillus cereus (strain ATCC 14579 / DSM 31 / CCUG 7414 / JCM 2152 / NBRC 15305 / NCIMB 9373 / NCTC 2599 / NRRL B-3711) protein is tRNA(Ile)-lysidine synthase.